The primary structure comprises 1369 residues: ATP-dependent RNA helicase DHX29 (1369 aa).

Disordered stretches follow at residues 27 to 75 (SAEA…TNDS) and 176 to 226 (SQEF…KNME). Ser-71, Ser-192, and Ser-200 each carry phosphoserine. Residues 189–201 (KFQSPQIQATISP) show a composition bias toward polar residues. Positions 208–226 (KTYEEDPKSKPKKEEKNME) are enriched in basic and acidic residues. Coiled-coil stretches lie at residues 222-256 (EKNMEVNMKEWILRYAEQQNEEEKNENSKSLEEEE), 283-310 (LEKNKQGQKEAQEKIRKFQREMETLEDH), and 492-519 (IAKLLNKLKQQQQQQQQHSENKRENSED). Positions 502–526 (QQQQQQQHSENKRENSEDPEESWEN) are disordered. The 174-residue stretch at 582-755 (VETLKRHRVV…FTHCPILRIS (174 aa)) folds into the Helicase ATP-binding domain. ATP is bound at residue 595–602 (GETGSGKS). Positions 702–705 (DEVH) match the DEAH box motif. Positions 849 to 1026 (LILELLAYLD…ELCLHIMKCN (178 aa)) constitute a Helicase C-terminal domain.

It belongs to the DEAD box helicase family. DEAH subfamily. Part of the 43S pre-initiation complex (PIC) that contains at least Met-tRNA, EIF1, EIF1A (EIF1AX or EIF1AY), EIF2S1, EIF2S2, EIF2S3, EIF3A, EIF3B, EIF3C, EIF3D, EIF3E, EIF3F, EIF3G, EIF3H, EIF3I, EIF3J, EIF3K, EIF3L, EIF3M, DHX29 and the 40S ribosomal subunit.

The protein resides in the cytoplasm. The catalysed reaction is ATP + H2O = ADP + phosphate + H(+). ATP-binding RNA helicase involved in translation initiation. Part of the 43S pre-initiation complex that is required for efficient initiation on mRNAs of higher eukaryotes with structured 5'-UTRs by promoting efficient NTPase-dependent 48S complex formation. Specifically binds to the 40S ribosome near the mRNA entrance. Does not possess a processive helicase activity. This chain is ATP-dependent RNA helicase DHX29, found in Homo sapiens (Human).